Here is a 162-residue protein sequence, read N- to C-terminus: UPF0303 protein RL3365 (162 aa).

It belongs to the UPF0303 family.

The chain is UPF0303 protein RL3365 from Rhizobium johnstonii (strain DSM 114642 / LMG 32736 / 3841) (Rhizobium leguminosarum bv. viciae).